Reading from the N-terminus, the 238-residue chain is 4-hydroxy-tetrahydrodipicolinate reductase (238 aa).

Residue 12 to 17 coordinates NAD(+); it reads GASGRM. Arginine 40 lines the NADP(+) pocket. Residues 93-95 and 117-120 contribute to the NAD(+) site; these read GTT and ASNF. Histidine 149 functions as the Proton donor/acceptor in the catalytic mechanism. Histidine 150 serves as a coordination point for (S)-2,3,4,5-tetrahydrodipicolinate. Lysine 153 functions as the Proton donor in the catalytic mechanism. Position 159–160 (159–160) interacts with (S)-2,3,4,5-tetrahydrodipicolinate; that stretch reads GT.

This sequence belongs to the DapB family.

The protein localises to the cytoplasm. It catalyses the reaction (S)-2,3,4,5-tetrahydrodipicolinate + NAD(+) + H2O = (2S,4S)-4-hydroxy-2,3,4,5-tetrahydrodipicolinate + NADH + H(+). The catalysed reaction is (S)-2,3,4,5-tetrahydrodipicolinate + NADP(+) + H2O = (2S,4S)-4-hydroxy-2,3,4,5-tetrahydrodipicolinate + NADPH + H(+). It functions in the pathway amino-acid biosynthesis; L-lysine biosynthesis via DAP pathway; (S)-tetrahydrodipicolinate from L-aspartate: step 4/4. Its function is as follows. Catalyzes the conversion of 4-hydroxy-tetrahydrodipicolinate (HTPA) to tetrahydrodipicolinate. The chain is 4-hydroxy-tetrahydrodipicolinate reductase from Xanthomonas euvesicatoria pv. vesicatoria (strain 85-10) (Xanthomonas campestris pv. vesicatoria).